A 534-amino-acid chain; its full sequence is Light-independent protochlorophyllide reductase subunit B (534 aa).

Asp-36 lines the [4Fe-4S] cluster pocket. Asp-274 functions as the Proton donor in the catalytic mechanism. Gly-409 to Leu-410 provides a ligand contact to substrate. A disordered region spans residues Asp-426 to Asp-446.

Belongs to the ChlB/BchB/BchZ family. In terms of assembly, protochlorophyllide reductase is composed of three subunits; BchL, BchN and BchB. Forms a heterotetramer of two BchB and two BchN subunits. [4Fe-4S] cluster serves as cofactor.

It catalyses the reaction chlorophyllide a + oxidized 2[4Fe-4S]-[ferredoxin] + 2 ADP + 2 phosphate = protochlorophyllide a + reduced 2[4Fe-4S]-[ferredoxin] + 2 ATP + 2 H2O. Its pathway is porphyrin-containing compound metabolism; bacteriochlorophyll biosynthesis (light-independent). Component of the dark-operative protochlorophyllide reductase (DPOR) that uses Mg-ATP and reduced ferredoxin to reduce ring D of protochlorophyllide (Pchlide) to form chlorophyllide a (Chlide). This reaction is light-independent. The NB-protein (BchN-BchB) is the catalytic component of the complex. The sequence is that of Light-independent protochlorophyllide reductase subunit B from Cereibacter sphaeroides (strain ATCC 17029 / ATH 2.4.9) (Rhodobacter sphaeroides).